Consider the following 103-residue polypeptide: Large ribosomal subunit protein bL21 (103 aa).

It belongs to the bacterial ribosomal protein bL21 family. As to quaternary structure, part of the 50S ribosomal subunit. Contacts protein L20.

This protein binds to 23S rRNA in the presence of protein L20. The chain is Large ribosomal subunit protein bL21 from Shewanella putrefaciens (strain CN-32 / ATCC BAA-453).